The sequence spans 145 residues: 3-hydroxyacyl-[acyl-carrier-protein] dehydratase FabZ (145 aa).

H47 is an active-site residue.

Belongs to the thioester dehydratase family. FabZ subfamily.

Its subcellular location is the cytoplasm. It catalyses the reaction a (3R)-hydroxyacyl-[ACP] = a (2E)-enoyl-[ACP] + H2O. In terms of biological role, involved in unsaturated fatty acids biosynthesis. Catalyzes the dehydration of short chain beta-hydroxyacyl-ACPs and long chain saturated and unsaturated beta-hydroxyacyl-ACPs. In Polaromonas sp. (strain JS666 / ATCC BAA-500), this protein is 3-hydroxyacyl-[acyl-carrier-protein] dehydratase FabZ.